The following is a 299-amino-acid chain: Pantothenate synthetase (299 aa).

41–48 (MGALHEGH) is a binding site for ATP. The active-site Proton donor is histidine 48. Residue glutamine 72 coordinates (R)-pantoate. Position 72 (glutamine 72) interacts with beta-alanine. 158-161 (GQKD) is a binding site for ATP. Glutamine 164 contacts (R)-pantoate. Residues valine 187 and 195 to 198 (MSSR) contribute to the ATP site.

It belongs to the pantothenate synthetase family. In terms of assembly, homodimer.

It localises to the cytoplasm. It catalyses the reaction (R)-pantoate + beta-alanine + ATP = (R)-pantothenate + AMP + diphosphate + H(+). The protein operates within cofactor biosynthesis; (R)-pantothenate biosynthesis; (R)-pantothenate from (R)-pantoate and beta-alanine: step 1/1. In terms of biological role, catalyzes the condensation of pantoate with beta-alanine in an ATP-dependent reaction via a pantoyl-adenylate intermediate. In Acidobacterium capsulatum (strain ATCC 51196 / DSM 11244 / BCRC 80197 / JCM 7670 / NBRC 15755 / NCIMB 13165 / 161), this protein is Pantothenate synthetase.